The sequence spans 382 residues: Queuine tRNA-ribosyltransferase (382 aa).

The active-site Proton acceptor is Asp-89. Substrate is bound by residues 89–93 (DSGGF), Asp-143, Gln-187, and Gly-214. Residues 245–251 (GVGKPED) form an RNA binding region. The active-site Nucleophile is the Asp-264. The tract at residues 269 to 273 (TRNAR) is RNA binding; important for wobble base 34 recognition. Zn(2+)-binding residues include Cys-302, Cys-304, Cys-307, and His-333.

This sequence belongs to the queuine tRNA-ribosyltransferase family. Homodimer. Within each dimer, one monomer is responsible for RNA recognition and catalysis, while the other monomer binds to the replacement base PreQ1. The cofactor is Zn(2+).

The catalysed reaction is 7-aminomethyl-7-carbaguanine + guanosine(34) in tRNA = 7-aminomethyl-7-carbaguanosine(34) in tRNA + guanine. It functions in the pathway tRNA modification; tRNA-queuosine biosynthesis. Functionally, catalyzes the base-exchange of a guanine (G) residue with the queuine precursor 7-aminomethyl-7-deazaguanine (PreQ1) at position 34 (anticodon wobble position) in tRNAs with GU(N) anticodons (tRNA-Asp, -Asn, -His and -Tyr). Catalysis occurs through a double-displacement mechanism. The nucleophile active site attacks the C1' of nucleotide 34 to detach the guanine base from the RNA, forming a covalent enzyme-RNA intermediate. The proton acceptor active site deprotonates the incoming PreQ1, allowing a nucleophilic attack on the C1' of the ribose to form the product. After dissociation, two additional enzymatic reactions on the tRNA convert PreQ1 to queuine (Q), resulting in the hypermodified nucleoside queuosine (7-(((4,5-cis-dihydroxy-2-cyclopenten-1-yl)amino)methyl)-7-deazaguanosine). This is Queuine tRNA-ribosyltransferase from Sodalis glossinidius (strain morsitans).